The following is a 552-amino-acid chain: Leucine-rich repeat-containing protein 31 (552 aa).

The segment at 1–65 (MSQTRKKTSS…SETAKPLSSE (65 aa)) is disordered. The segment covering 31–41 (ESRKEDNDLKT) has biased composition (basic and acidic residues). The segment covering 42–58 (SDSQPSDWIQKTATSET) has biased composition (polar residues). LRR repeat units lie at residues 227–246 (SLEV…LNSI), 255–275 (NLKV…KILD), 283–293 (ELRKLDLSCNK), 311–331 (HLQV…MSLT), 339–360 (NLQE…NLLS), 367–387 (ALKS…TALA), 395–415 (ALEV…KLLL), 423–443 (SLQV…ALLA), and 453–475 (KLQK…MFCQ).

This is Leucine-rich repeat-containing protein 31 (LRRC31) from Homo sapiens (Human).